The primary structure comprises 268 residues: Tryptophan synthase alpha chain (268 aa).

Residues Glu49 and Asp60 each act as proton acceptor in the active site.

It belongs to the TrpA family. Tetramer of two alpha and two beta chains.

The enzyme catalyses (1S,2R)-1-C-(indol-3-yl)glycerol 3-phosphate + L-serine = D-glyceraldehyde 3-phosphate + L-tryptophan + H2O. It functions in the pathway amino-acid biosynthesis; L-tryptophan biosynthesis; L-tryptophan from chorismate: step 5/5. Its function is as follows. The alpha subunit is responsible for the aldol cleavage of indoleglycerol phosphate to indole and glyceraldehyde 3-phosphate. The chain is Tryptophan synthase alpha chain from Xylella fastidiosa (strain M23).